A 188-amino-acid polypeptide reads, in one-letter code: MRPGVRLAVDVGSVRVGLAACDPAGVIASPVRTLVRDPGHDADVAEIAAEARARGAVEIVLGLPLSLDGSEGPAALRALDYADKIVRSVPEVPVRLVDERLSTVGAHRALHAAGLKEKQFRAVVDQAAAVVLLQATLDAERTGHAPGRVVAGPKGRRKARHRGQGGTGTEQQADAGGRARPHATEGKG.

Residues 144–188 (HAPGRVVAGPKGRRKARHRGQGGTGTEQQADAGGRARPHATEGKG) are disordered. Residues 154–163 (KGRRKARHRG) show a composition bias toward basic residues.

This sequence belongs to the YqgF nuclease family.

The protein resides in the cytoplasm. In terms of biological role, could be a nuclease involved in processing of the 5'-end of pre-16S rRNA. The polypeptide is Putative pre-16S rRNA nuclease (Kineococcus radiotolerans (strain ATCC BAA-149 / DSM 14245 / SRS30216)).